Reading from the N-terminus, the 507-residue chain is Peroxisomal membrane protein PEX14 (507 aa).

Composition is skewed to polar residues over residues 1–10 (MATHQQTQPP) and 32–48 (EVQQ…SVFK). The disordered stretch occupies residues 1-52 (MATHQQTQPPSDFPALADENSQIPEATKPANEVQQATIAQDPPTSVFKNSEP). Topologically, residues 1-152 (MATHQQTQPP…QAAFLSRFRW (152 aa)) are peroxisomal. Involved in interaction with PEX5 stretches follow at residues 58–65 (IQNAIKFL) and 78–97 (RRSF…EAFR). A helical transmembrane segment spans residues 153 to 173 (YHAILAVGVLAASGAGTAVFI). Topologically, residues 174 to 507 (KRSLIPRFKS…EQQHISQEGN (334 aa)) are cytoplasmic. Polar residues predominate over residues 288–302 (VTTARKPYTNGSNVD). Disordered stretches follow at residues 288 to 329 (VTTA…PKSY), 344 to 394 (NIRE…NPRS), 409 to 435 (ANQN…QPPP), and 448 to 507 (PKPQ…QEGN). Positions 308–322 (ARSASPPAAPADSSA) are enriched in low complexity. The segment covering 378–394 (QDESSNGQWWQQKNPRS) has biased composition (polar residues).

This sequence belongs to the peroxin-14 family. Interacts with PEX13; forming the PEX13-PEX14 docking complex. Interacts with PEX5 (via WxxxF/Y motifs). As to expression, expressed in flowers, siliques, leaves and roots.

The protein resides in the peroxisome membrane. Functionally, component of the PEX13-PEX14 docking complex, a translocon channel that specifically mediates the import of peroxisomal cargo proteins bound to PEX5 receptor. The PEX13-PEX14 docking complex forms a large import pore which can be opened to a diameter of about 9 nm. Mechanistically, PEX5 receptor along with cargo proteins associates with the PEX14 subunit of the PEX13-PEX14 docking complex in the cytosol, leading to the insertion of the receptor into the organelle membrane with the concomitant translocation of the cargo into the peroxisome matrix. This chain is Peroxisomal membrane protein PEX14, found in Arabidopsis thaliana (Mouse-ear cress).